A 487-amino-acid polypeptide reads, in one-letter code: Glutamate--tRNA ligase (487 aa).

The short motif at 12 to 22 (PSPTGYMHVGN) is the 'HIGH' region element. Positions 249-253 (KLSKR) match the 'KMSKS' region motif. Position 252 (K252) interacts with ATP.

The protein belongs to the class-I aminoacyl-tRNA synthetase family. Glutamate--tRNA ligase type 1 subfamily. Monomer.

The protein localises to the cytoplasm. It carries out the reaction tRNA(Glu) + L-glutamate + ATP = L-glutamyl-tRNA(Glu) + AMP + diphosphate. Its function is as follows. Catalyzes the attachment of glutamate to tRNA(Glu) in a two-step reaction: glutamate is first activated by ATP to form Glu-AMP and then transferred to the acceptor end of tRNA(Glu). The sequence is that of Glutamate--tRNA ligase from Clostridium novyi (strain NT).